The sequence spans 380 residues: Crotonobetainyl-CoA reductase (380 aa).

This sequence belongs to the acyl-CoA dehydrogenase family. Homotetramer. It depends on FAD as a cofactor.

The protein localises to the cytoplasm. The catalysed reaction is 4-(trimethylamino)butanoyl-CoA + oxidized [electron-transfer flavoprotein] + H(+) = crotonobetainyl-CoA + reduced [electron-transfer flavoprotein]. The protein operates within amine and polyamine metabolism; carnitine metabolism. Functionally, catalyzes the reduction of crotonobetainyl-CoA to gamma-butyrobetainyl-CoA. In Proteus sp. (strain LE138), this protein is Crotonobetainyl-CoA reductase.